The chain runs to 149 residues: Large ribosomal subunit protein bL9 (149 aa).

Belongs to the bacterial ribosomal protein bL9 family.

Its function is as follows. Binds to the 23S rRNA. The polypeptide is Large ribosomal subunit protein bL9 (Desulforamulus reducens (strain ATCC BAA-1160 / DSM 100696 / MI-1) (Desulfotomaculum reducens)).